A 244-amino-acid chain; its full sequence is 14-3-3 protein beta/alpha (244 aa).

Position 1 is an N-acetylmethionine (M1). S184 carries the phosphoserine modification.

It belongs to the 14-3-3 family. Homodimer, and heterodimer with other family members. In terms of processing, phosphorylated.

The protein resides in the cytoplasm. Functionally, adapter protein implicated in the regulation of a large spectrum of both general and specialized signaling pathways. Binds to a large number of partners, usually by recognition of a phosphoserine or phosphothreonine motif. Binding generally results in the modulation of the activity of the binding partner. In Gallus gallus (Chicken), this protein is 14-3-3 protein beta/alpha (YWHAB).